The primary structure comprises 341 residues: 5-formaminoimidazole-4-carboxamide-1-(beta)-D-ribofuranosyl 5'-monophosphate synthetase (341 aa).

5-amino-1-(5-phospho-beta-D-ribosyl)imidazole-4-carboxamide contacts are provided by H27 and S92. One can recognise an ATP-grasp domain in the interval 113 to 328 (RELLRWEADQ…MGERIAHEIK (216 aa)). Residues 143–195 (AEEV…VPAY) and E217 each bind ATP. N237 is a 5-amino-1-(5-phospho-beta-D-ribosyl)imidazole-4-carboxamide binding site. E276 and E289 together coordinate Mg(2+).

It belongs to the phosphohexose mutase family. Mg(2+) serves as cofactor. Requires Mn(2+) as cofactor.

The catalysed reaction is 5-amino-1-(5-phospho-beta-D-ribosyl)imidazole-4-carboxamide + formate + ATP = 5-formamido-1-(5-phospho-D-ribosyl)imidazole-4-carboxamide + ADP + phosphate. Its pathway is purine metabolism; IMP biosynthesis via de novo pathway; 5-formamido-1-(5-phospho-D-ribosyl)imidazole-4-carboxamide from 5-amino-1-(5-phospho-D-ribosyl)imidazole-4-carboxamide (formate route): step 1/1. Functionally, catalyzes the ATP- and formate-dependent formylation of 5-aminoimidazole-4-carboxamide-1-beta-d-ribofuranosyl 5'-monophosphate (AICAR) to 5-formaminoimidazole-4-carboxamide-1-beta-d-ribofuranosyl 5'-monophosphate (FAICAR) in the absence of folates. The polypeptide is 5-formaminoimidazole-4-carboxamide-1-(beta)-D-ribofuranosyl 5'-monophosphate synthetase (Pyrobaculum aerophilum (strain ATCC 51768 / DSM 7523 / JCM 9630 / CIP 104966 / NBRC 100827 / IM2)).